The following is a 216-amino-acid chain: MIRKTSVLRSNFIGIYAKAWDDVAFITMMADEKTVADFQEVLQVDVRRISIDNSSLIGTMMVMNSNGLIVPYGSEITGLGDLDGRNVLQLKDKINAIGNDIIANDHGAIIHKNFSNRSRKEIEDTLGVETIRTTIGNILTVGSAGILTSKGMLVNPETDDDELEFLRDFFKVSVKSGTANFGSIYVGASIVANSKGVLVGKDTTPIEMDRIDDVLS.

Belongs to the eIF-6 family.

Binds to the 50S ribosomal subunit and prevents its association with the 30S ribosomal subunit to form the 70S initiation complex. The sequence is that of Translation initiation factor 6 from Thermoplasma acidophilum (strain ATCC 25905 / DSM 1728 / JCM 9062 / NBRC 15155 / AMRC-C165).